A 1503-amino-acid chain; its full sequence is DNA-directed RNA polymerase subunit beta' (1503 aa).

Cys-60, Cys-62, Cys-75, and Cys-78 together coordinate Zn(2+). Mg(2+)-binding residues include Asp-626, Asp-628, and Asp-630. Cys-1002, Cys-1075, Cys-1082, and Cys-1085 together coordinate Zn(2+). The disordered stretch occupies residues 1439-1503; that stretch reads EESQQAEEAP…EEEDNDLPAF (65 aa). A compositionally biased stretch (acidic residues) spans 1486–1503; it reads GDNDQSDAEEEDNDLPAF.

It belongs to the RNA polymerase beta' chain family. In terms of assembly, the RNAP catalytic core consists of 2 alpha, 1 beta, 1 beta' and 1 omega subunit. When a sigma factor is associated with the core the holoenzyme is formed, which can initiate transcription. Mg(2+) serves as cofactor. It depends on Zn(2+) as a cofactor.

It carries out the reaction RNA(n) + a ribonucleoside 5'-triphosphate = RNA(n+1) + diphosphate. Its function is as follows. DNA-dependent RNA polymerase catalyzes the transcription of DNA into RNA using the four ribonucleoside triphosphates as substrates. The sequence is that of DNA-directed RNA polymerase subunit beta' from Chloroflexus aurantiacus (strain ATCC 29364 / DSM 637 / Y-400-fl).